Consider the following 331-residue polypeptide: DSC E3 ubiquitin ligase complex subunit D (331 aa).

N-linked (GlcNAc...) asparagine glycosylation is present at Asn-26. 3 helical membrane passes run 63 to 83 (ILIYCELSALYYMDCSVILFA), 107 to 127 (PFIGAIFVSNIFCMIFHNFFT), and 159 to 179 (LFLLDFLVLILDLVMLGLIVE). The segment covering 197-214 (VQDHDSEERGVHRTRPES) has biased composition (basic and acidic residues). Residues 197 to 225 (VQDHDSEERGVHRTRPESRSSVVGAELDE) are disordered.

Component of the DSC E3 ubiquitin ligase complex composed of dscA, dscB, dscC and dscD.

Its subcellular location is the endoplasmic reticulum membrane. It participates in protein modification; protein ubiquitination. Functionally, component of the DSC E3 ubiquitin ligase complex which is required for the srbA transcriptional activator proteolytic cleavage to release the soluble transcription factor from the membrane in low oxygen or sterol conditions. Required for growth during hypoxia and triazole drug susceptibility, as well as for virulence in a murine model of invasive pulmonary aspergillosis (IPA). The chain is DSC E3 ubiquitin ligase complex subunit D from Aspergillus fumigatus (strain CBS 144.89 / FGSC A1163 / CEA10) (Neosartorya fumigata).